Consider the following 648-residue polypeptide: Primary amine oxidase (648 aa).

The propeptide occupies methionine 1 to alanine 9. Alanine 299–methionine 310 provides a ligand contact to substrate. The active-site Proton acceptor is the aspartate 301. Cysteine 320 and cysteine 346 are disulfide-bonded. Substrate is bound at residue valine 382–tyrosine 387. Tyrosine 385 (schiff-base intermediate with substrate; via topaquinone) is an active-site residue. Tyrosine 385 carries the post-translational modification 2',4',5'-topaquinone. 2 residues coordinate Cu cation: histidine 436 and histidine 438. 3 residues coordinate Mn(2+): aspartate 445, phenylalanine 446, and aspartate 584. Histidine 595 serves as a coordination point for Cu cation.

Belongs to the copper/topaquinone oxidase family. In terms of assembly, homodimer. It depends on Cu cation as a cofactor. Zn(2+) serves as cofactor. L-topaquinone is required as a cofactor. Requires Mn(2+) as cofactor. Topaquinone (TPQ) is generated by copper-dependent autoxidation of a specific tyrosyl residue.

It catalyses the reaction a primary methyl amine + O2 + H2O = an aldehyde + H2O2 + NH4(+). Functionally, the exact function of MaoXI is not known. This chain is Primary amine oxidase (maoI), found in Arthrobacter sp. (strain P1).